The sequence spans 792 residues: Probable CoA-transferase Rv1866 (792 aa).

The Nucleophile role is filled by Asp558.

Belongs to the CoA-transferase III family.

In terms of biological role, probable CoA-transferase. In Mycobacterium tuberculosis (strain ATCC 25618 / H37Rv), this protein is Probable CoA-transferase Rv1866.